The primary structure comprises 141 residues: Hemoglobin subunit alpha (141 aa).

One can recognise a Globin domain in the interval 1-141 (VLSPADKTNV…VSTVLTSKYR (141 aa)). Ser-3 bears the Phosphoserine mark. N6-succinyllysine is present on Lys-7. Phosphothreonine is present on Thr-8. Residue Lys-11 is modified to N6-succinyllysine. Residue Lys-16 is modified to N6-acetyllysine; alternate. Residue Lys-16 is modified to N6-succinyllysine; alternate. Tyr-24 bears the Phosphotyrosine mark. The residue at position 35 (Ser-35) is a Phosphoserine. The residue at position 40 (Lys-40) is an N6-succinyllysine. Ser-49 is subject to Phosphoserine. His-58 provides a ligand contact to O2. His-87 is a heme b binding site. Residue Ser-102 is modified to Phosphoserine. At Thr-108 the chain carries Phosphothreonine. Ser-124 is subject to Phosphoserine. Thr-134 and Thr-137 each carry phosphothreonine. Position 138 is a phosphoserine (Ser-138).

The protein belongs to the globin family. As to quaternary structure, heterotetramer of two alpha chains and two beta chains. As to expression, red blood cells.

In terms of biological role, involved in oxygen transport from the lung to the various peripheral tissues. This Tamias merriami (Merriam's chipmunk) protein is Hemoglobin subunit alpha.